Consider the following 43-residue polypeptide: Protein PsbN (43 aa).

A helical membrane pass occupies residues 5-27 (TLVXISISGSLVSFTGYALYTAF).

This sequence belongs to the PsbN family.

The protein localises to the plastid. It localises to the chloroplast thylakoid membrane. In terms of biological role, may play a role in photosystem I and II biogenesis. The sequence is that of Protein PsbN from Calycanthus floridus (Eastern sweetshrub).